Consider the following 265-residue polypeptide: Probable enoyl-CoA hydratase 1, peroxisomal (265 aa).

Methionine 1 is subject to N-acetylmethionine. Substrate-binding positions include 68–72 (SGVDL) and alanine 112. The Microbody targeting signal motif lies at 263–265 (SKL).

This sequence belongs to the enoyl-CoA hydratase/isomerase family.

It is found in the peroxisome. The catalysed reaction is a (3S)-3-hydroxyacyl-CoA = a (2E)-enoyl-CoA + H2O. The enzyme catalyses a 4-saturated-(3S)-3-hydroxyacyl-CoA = a (3E)-enoyl-CoA + H2O. The protein operates within lipid metabolism; fatty acid beta-oxidation. Functionally, straight-chain enoyl-CoA thioesters from C4 up to at least C16 are processed, although with decreasing catalytic rate. The polypeptide is Probable enoyl-CoA hydratase 1, peroxisomal (Arabidopsis thaliana (Mouse-ear cress)).